Here is a 362-residue protein sequence, read N- to C-terminus: Protein mom-2 (362 aa).

The N-terminal stretch at 1-24 (MHINTPVLLAIIYFLVFAPKSADA) is a signal peptide. 5 disulfides stabilise this stretch: C80/C91, C129/C137, C139/C167, C217/C231, and C219/C226. N-linked (GlcNAc...) asparagine glycosylation is present at N90. S223 carries O-palmitoleoyl serine; by mom-1 lipidation. The tract at residues 263 to 282 (TVRSSPSAGSSGRSERFARN) is disordered. The segment covering 265 to 274 (RSSPSAGSSG) has biased composition (low complexity). Disulfide bonds link C304/C322, C313/C317, C321/C361, C337/C352, C339/C349, and C344/C345.

This sequence belongs to the Wnt family. Post-translationally, palmitoleoylation is required for efficient binding to frizzled receptors. Depalmitoleoylation leads to Wnt signaling pathway inhibition. As to expression, expressed by anchor cell and vulva precursor cell descendants P5.ppa, P5.ppp, P7.paa and P7.pap. Expressed in the tail and weakly expressed in the vulva and body wall muscles.

Its subcellular location is the secreted. The protein localises to the extracellular space. It localises to the extracellular matrix. Functionally, ligand for members of the frizzled family of seven transmembrane receptors. Required in embryonic development for endoderm specification and the correct positioning and orientation of the mitotic spindles and division planes in blastomere cells. Involved in cleavage axis determination. Binds to receptor tyrosine kinase cam-1. Together with wnt ligand lin-44, plays a role in controlling vulva precursor cell P7.p lineage orientation during vulva development, probably by acting as a ligand for tyrosine kinase receptor lin-18. May act redundantly with other Wnt ligands such as cwn-1 and cwn-2 to control seam cell polarity. In Caenorhabditis elegans, this protein is Protein mom-2 (mom-2).